We begin with the raw amino-acid sequence, 510 residues long: GMP synthase [glutamine-hydrolyzing] (510 aa).

A Glutamine amidotransferase type-1 domain is found at 5–195 (LVLILDFGGQ…LYEVCHCQGD (191 aa)). The active-site Nucleophile is the C82. Active-site residues include H169 and E171. The 190-residue stretch at 196–385 (WTMENYIEKE…LGVPEEIVWR (190 aa)) folds into the GMPS ATP-PPase domain. Residue 223-229 (SGGVDSS) participates in ATP binding.

Homodimer.

The enzyme catalyses XMP + L-glutamine + ATP + H2O = GMP + L-glutamate + AMP + diphosphate + 2 H(+). It functions in the pathway purine metabolism; GMP biosynthesis; GMP from XMP (L-Gln route): step 1/1. Catalyzes the synthesis of GMP from XMP. This chain is GMP synthase [glutamine-hydrolyzing], found in Alkaliphilus metalliredigens (strain QYMF).